The chain runs to 346 residues: N-acetyl-gamma-glutamyl-phosphate reductase (346 aa).

The active site involves Cys-149.

The protein belongs to the NAGSA dehydrogenase family. Type 1 subfamily.

Its subcellular location is the cytoplasm. It catalyses the reaction N-acetyl-L-glutamate 5-semialdehyde + phosphate + NADP(+) = N-acetyl-L-glutamyl 5-phosphate + NADPH + H(+). The protein operates within amino-acid biosynthesis; L-arginine biosynthesis; N(2)-acetyl-L-ornithine from L-glutamate: step 3/4. Catalyzes the NADPH-dependent reduction of N-acetyl-5-glutamyl phosphate to yield N-acetyl-L-glutamate 5-semialdehyde. This is N-acetyl-gamma-glutamyl-phosphate reductase from Geobacter sp. (strain M21).